The chain runs to 252 residues: Small ribosomal subunit protein uS3 (252 aa).

The KH type-2 domain occupies 39–110; the sequence is IRKALMKELK…EVKINVVEIK (72 aa). Positions 218–252 are disordered; the sequence is TSDEKPKFEKRDFNRSNNNRRDQAPKSHPVAKEAK. The segment covering 219–252 has biased composition (basic and acidic residues); the sequence is SDEKPKFEKRDFNRSNNNRRDQAPKSHPVAKEAK.

This sequence belongs to the universal ribosomal protein uS3 family. Part of the 30S ribosomal subunit. Forms a tight complex with proteins S10 and S14.

Functionally, binds the lower part of the 30S subunit head. Binds mRNA in the 70S ribosome, positioning it for translation. The chain is Small ribosomal subunit protein uS3 from Spiroplasma citri.